A 376-amino-acid chain; its full sequence is Putative transcription factor egl-18 (376 aa).

4 disordered regions span residues Met1 to Cys33, Asn65 to Phe122, Met148 to Pro197, and Ala240 to Ala264. Basic and acidic residues predominate over residues Thr9–Asp27. 2 stretches are compositionally biased toward low complexity: residues Leu68–Pro89 and Gln165–Ser175. Residues Val176–Asp195 are compositionally biased toward basic and acidic residues. Over residues Thr241–Ser250 the composition is skewed to polar residues. The GATA-type zinc-finger motif lies at Cys266–Cys290.

In terms of tissue distribution, expressed in differentiated seam cells. Expressed in the head and trunk.

It is found in the nucleus. Functionally, probable transcription factor. Involved in embryonic development and in vulval development in larvae, acting redundantly, at least in part, with elt-6. Perhaps acting together with elt-6, may form a positive feedback loop to initiate and maintain lin-39 gene expression to ensure proper vulval precursor cell (VPC) fate specification. Together with elt-6, acts as a downstream target of the Wnt/beta-catenin asymmetry pathway, required to adopt or maintain the seam cell fate. Required in seam cells, acting redundantly with elt-6, to promote production of alae, expression of several seam-specific genes and maintenance of seam cells in an unfused state. Plays a role in longevity. May form a transcriptional circuit with GATA factors elt-3 and elt-6. The sequence is that of Putative transcription factor egl-18 from Caenorhabditis elegans.